A 100-amino-acid chain; its full sequence is Urease subunit gamma (100 aa).

It belongs to the urease gamma subunit family. Heterotrimer of UreA (gamma), UreB (beta) and UreC (alpha) subunits. Three heterotrimers associate to form the active enzyme.

It is found in the cytoplasm. The enzyme catalyses urea + 2 H2O + H(+) = hydrogencarbonate + 2 NH4(+). The protein operates within nitrogen metabolism; urea degradation; CO(2) and NH(3) from urea (urease route): step 1/1. This is Urease subunit gamma from Stutzerimonas stutzeri (strain A1501) (Pseudomonas stutzeri).